We begin with the raw amino-acid sequence, 208 residues long: UPF0319 protein VSAL_I2129 (208 aa).

A signal peptide spans 1–21; that stretch reads MKFHSFLAAGLCLLTSLSASA.

Belongs to the UPF0319 family.

The sequence is that of UPF0319 protein VSAL_I2129 from Aliivibrio salmonicida (strain LFI1238) (Vibrio salmonicida (strain LFI1238)).